We begin with the raw amino-acid sequence, 635 residues long: 1-deoxy-D-xylulose-5-phosphate synthase (635 aa).

Thiamine diphosphate-binding positions include histidine 79 and 120–122 (GHS). Aspartate 151 is a binding site for Mg(2+). Thiamine diphosphate contacts are provided by residues 152–153 (GA), asparagine 182, tyrosine 291, and glutamate 372. Residue asparagine 182 participates in Mg(2+) binding.

The protein belongs to the transketolase family. DXPS subfamily. In terms of assembly, homodimer. Mg(2+) serves as cofactor. Thiamine diphosphate is required as a cofactor.

It catalyses the reaction D-glyceraldehyde 3-phosphate + pyruvate + H(+) = 1-deoxy-D-xylulose 5-phosphate + CO2. It participates in metabolic intermediate biosynthesis; 1-deoxy-D-xylulose 5-phosphate biosynthesis; 1-deoxy-D-xylulose 5-phosphate from D-glyceraldehyde 3-phosphate and pyruvate: step 1/1. In terms of biological role, catalyzes the acyloin condensation reaction between C atoms 2 and 3 of pyruvate and glyceraldehyde 3-phosphate to yield 1-deoxy-D-xylulose-5-phosphate (DXP). The chain is 1-deoxy-D-xylulose-5-phosphate synthase from Xylella fastidiosa (strain M23).